We begin with the raw amino-acid sequence, 329 residues long: Glyceraldehyde-3-phosphate dehydrogenase 1 (329 aa).

Residues 11 to 12 (RI), Asp33, and Lys78 contribute to the NAD(+) site. Residues 148 to 150 (SCT), Thr179, 208 to 209 (TG), and Arg231 contribute to the D-glyceraldehyde 3-phosphate site. Cys149 acts as the Nucleophile in catalysis. Asn313 lines the NAD(+) pocket.

Belongs to the glyceraldehyde-3-phosphate dehydrogenase family. Homotetramer.

The protein localises to the cytoplasm. It carries out the reaction D-glyceraldehyde 3-phosphate + phosphate + NAD(+) = (2R)-3-phospho-glyceroyl phosphate + NADH + H(+). The protein operates within carbohydrate degradation; glycolysis; pyruvate from D-glyceraldehyde 3-phosphate: step 1/5. The sequence is that of Glyceraldehyde-3-phosphate dehydrogenase 1 (GAP1) from Kluyveromyces lactis (strain ATCC 8585 / CBS 2359 / DSM 70799 / NBRC 1267 / NRRL Y-1140 / WM37) (Yeast).